The primary structure comprises 342 residues: Protein-ribulosamine 3-kinase, chloroplastic (342 aa).

Residues 1-46 (MANVALLSAASPSTSSAAPRLRHVARRRPSRRSACPRSAASRLSIM) constitute a chloroplast transit peptide. 141-143 (EFI) lines the ATP pocket. Asp-246 functions as the Proton acceptor in the catalytic mechanism.

Belongs to the fructosamine kinase family.

It is found in the plastid. Its subcellular location is the chloroplast. It catalyses the reaction N(6)-D-ribulosyl-L-lysyl-[protein] + ATP = N(6)-(3-O-phospho-D-ribulosyl)-L-lysyl-[protein] + ADP + H(+). The enzyme catalyses N(6)-(D-erythrulosyl)-L-lysyl-[protein] + ATP = N(6)-(3-O-phospho-D-erythrulosyl)-L-lysyl-[protein] + ADP + H(+). In terms of biological role, initiates a process leading to the deglycation of proteins. Phosphorylates low-molecular-mass and protein-bound erythrulosamines and ribulosamines, but not fructosamines or psicosamines, on the third carbon of the sugar moiety. Protein-bound erythrulosamine 3-phosphates and ribulosamine 3-phosphates are unstable and decompose under physiological conditions. The protein is Protein-ribulosamine 3-kinase, chloroplastic of Oryza sativa subsp. indica (Rice).